A 503-amino-acid chain; its full sequence is Zinc finger and BTB domain-containing protein 37 (503 aa).

In terms of domain architecture, BTB spans 32-96 (CDIVVNVQGQ…CYTGRICLQL (65 aa)). 2 disordered regions span residues 140–206 (QTRT…SDVE) and 280–344 (GHGS…QVEE). Residues 144 to 154 (KHQERPPESHR) are compositionally biased toward basic and acidic residues. Residues 155 to 167 (VTPNLNRSLSPRH) are compositionally biased toward polar residues. Positions 319–336 (TERHRARSESPGRMDEPK) are enriched in basic and acidic residues. 3 consecutive C2H2-type zinc fingers follow at residues 373-395 (LTCI…MRLH), 401-423 (FVCR…IRKH), and 429-452 (FHCH…RKNH). The tract at residues 457–503 (PLEGPHSISPETTVTSRGQAEEESPSQEETVAPGEAVQGSVSTTGPD) is disordered. Residues 465–474 (SPETTVTSRG) show a composition bias toward polar residues.

It is found in the nucleus. In terms of biological role, may be involved in transcriptional regulation. This chain is Zinc finger and BTB domain-containing protein 37 (ZBTB37), found in Homo sapiens (Human).